A 155-amino-acid chain; its full sequence is Ribosomal RNA large subunit methyltransferase H (155 aa).

S-adenosyl-L-methionine-binding positions include L73, G104, and I123–F128.

Belongs to the RNA methyltransferase RlmH family. In terms of assembly, homodimer.

It localises to the cytoplasm. The catalysed reaction is pseudouridine(1915) in 23S rRNA + S-adenosyl-L-methionine = N(3)-methylpseudouridine(1915) in 23S rRNA + S-adenosyl-L-homocysteine + H(+). Specifically methylates the pseudouridine at position 1915 (m3Psi1915) in 23S rRNA. The polypeptide is Ribosomal RNA large subunit methyltransferase H (Francisella philomiragia subsp. philomiragia (strain ATCC 25017 / CCUG 19701 / FSC 153 / O#319-036)).